A 474-amino-acid chain; its full sequence is TOM1-like protein 1 (474 aa).

One can recognise a VHS domain in the interval 22-154; that stretch reads ATFAGVLTED…DLLKKGVQFP (133 aa). The interval 153-180 is disordered; sequence FPPSDGEPETRQEAGQISPNRPTSVPTA. The segment covering 165–178 has biased composition (polar residues); that stretch reads EAGQISPNRPTSVP. Ser170 is modified (phosphoserine). In terms of domain architecture, GAT spans 199–287; sequence EQIGKLHSEL…AVLGYERFTR (89 aa). A disordered region spans residues 291 to 317; that stretch reads RLLEQKRNRTEATRTSSEPSAPSCDLL. A compositionally biased stretch (basic and acidic residues) spans 293–302; the sequence is LEQKRNRTEA. Phosphoserine is present on residues Ser313 and Ser320. Residues 392-395 are interaction with GRB2; it reads YDNF. An SH3-binding motif is present at residues 420-424; the sequence is LPPLP. The tract at residues 441-444 is interaction with PIK3R1; that stretch reads YEVM. Tyr457 is modified (phosphotyrosine). Residues 457-460 carry the SH2-binding motif; that stretch reads YEEI.

The protein belongs to the TOM1 family. Interacts with LYN. Interacts with the SH2 and SH3 domains of FYN when phosphorylated. Also interacts with GRB2 and PIK3R1 when phosphorylated. In terms of processing, phosphorylated on tyrosines by LYN. Phosphorylated on tyrosines by FYN. Strongly expressed in brain and kidney, expressed at intermediate levels skin and heart, and weakly expressed in thymus. Not expressed in liver and spleen.

The protein resides in the golgi apparatus. It localises to the golgi stack. It is found in the endosome membrane. The protein localises to the cytoplasm. Its subcellular location is the membrane. Its function is as follows. Probable adapter protein involved in signaling pathways. Interacts with the SH2 and SH3 domains of various signaling proteins when it is phosphorylated. May promote FYN activation, possibly by disrupting intramolecular SH3-dependent interactions. The chain is TOM1-like protein 1 (Tom1l1) from Mus musculus (Mouse).